Reading from the N-terminus, the 37-residue chain is Large ribosomal subunit protein bL36c (37 aa).

Belongs to the bacterial ribosomal protein bL36 family.

It is found in the plastid. It localises to the chloroplast. This is Large ribosomal subunit protein bL36c from Gnetum parvifolium (Small-leaved jointfir).